We begin with the raw amino-acid sequence, 115 residues long: NADH-ubiquinone oxidoreductase chain 3 (115 aa).

3 consecutive transmembrane segments (helical) span residues 4–24, 55–75, and 87–107; these read FMALSVNIILSTCLILIAFWL, FFLVAITFLLFDLEIALLLPL, and MMLTAFILVSILALGLAYEWV.

Belongs to the complex I subunit 3 family. In terms of assembly, core subunit of respiratory chain NADH dehydrogenase (Complex I) which is composed of 45 different subunits. Interacts with TMEM186. Interacts with TMEM242.

Its subcellular location is the mitochondrion inner membrane. The catalysed reaction is a ubiquinone + NADH + 5 H(+)(in) = a ubiquinol + NAD(+) + 4 H(+)(out). Core subunit of the mitochondrial membrane respiratory chain NADH dehydrogenase (Complex I) which catalyzes electron transfer from NADH through the respiratory chain, using ubiquinone as an electron acceptor. Essential for the catalytic activity of complex I. This Osgoodomys banderanus (Michoacan deer mouse) protein is NADH-ubiquinone oxidoreductase chain 3.